We begin with the raw amino-acid sequence, 347 residues long: Phenylalanine--tRNA ligase alpha subunit (347 aa).

Glu-265 is a binding site for Mg(2+).

This sequence belongs to the class-II aminoacyl-tRNA synthetase family. Phe-tRNA synthetase alpha subunit type 1 subfamily. In terms of assembly, tetramer of two alpha and two beta subunits. It depends on Mg(2+) as a cofactor.

It is found in the cytoplasm. It catalyses the reaction tRNA(Phe) + L-phenylalanine + ATP = L-phenylalanyl-tRNA(Phe) + AMP + diphosphate + H(+). This chain is Phenylalanine--tRNA ligase alpha subunit, found in Wolbachia sp. subsp. Brugia malayi (strain TRS).